A 1197-amino-acid chain; its full sequence is Sensor protein EvgS (1197 aa).

An N-terminal signal peptide occupies residues 1-21 (MKFLPYIFLLCCGLWSTISFA). At 22 to 325 (DEDYIEYRGI…SMTDENGSVR (304 aa)) the chain is on the cytoplasmic side. A helical transmembrane segment spans residues 326-346 (GVMGDILNIITLQTGLNFSPI). At 347–537 (TVSHNIHAGT…TWDLYSEQFY (191 aa)) the chain is on the periplasmic side. A helical transmembrane segment spans residues 538–558 (IVTTLSVLLVGSSLLWGFYLL). The Cytoplasmic portion of the chain corresponds to 559–1197 (RSVRRRKVIQ…EIAVFCQQNN (639 aa)). The 221-residue stretch at 718 to 938 (TMSHEIRTPI…TFTITIPVEI (221 aa)) folds into the Histidine kinase domain. His721 carries the phosphohistidine; by autocatalysis modification. Residues 960-1074 (SILIADDHPT…VLKTHLSQLH (115 aa)) form the Response regulatory domain. Asp1009 is modified (4-aspartylphosphate). Residues 1098–1197 (DLQLMQEILM…EIAVFCQQNN (100 aa)) form the HPt domain. Position 1137 is a phosphohistidine (His1137).

Post-translationally, activation requires a sequential transfer of a phosphate group from a His in the primary transmitter domain, to an Asp in the receiver domain and to a His in the secondary transmitter domain.

It is found in the cell inner membrane. The enzyme catalyses ATP + protein L-histidine = ADP + protein N-phospho-L-histidine.. Its function is as follows. Member of the two-component regulatory system EvgS/EvgA. Phosphorylates EvgA via a four-step phosphorelay in response to environmental signals. In Escherichia coli O157:H7, this protein is Sensor protein EvgS (evgS).